The primary structure comprises 1369 residues: ATP-dependent RNA helicase DHX29 (1369 aa).

Disordered stretches follow at residues 27–75 and 176–226; these read SAEA…TNDS and SQEF…KNME. Residues serine 71, serine 192, and serine 200 each carry the phosphoserine modification. Positions 189 to 201 are enriched in polar residues; sequence KFQSPQIQATISP. The segment covering 208–226 has biased composition (basic and acidic residues); sequence KTYEEDPKSKPKKEEKNME. 3 coiled-coil regions span residues 222-256, 283-310, and 492-519; these read EKNMEVNMKEWILRYAEQQNEEEKNENSKSLEEEE, LEKNKQGQKEAQEKIRKFQREMETLEDH, and IAKLLNKLKQQQQQQQQHSENKRENSED. Residues 502-526 form a disordered region; the sequence is QQQQQQQHSENKRENSEDPEESWEN. Positions 582-755 constitute a Helicase ATP-binding domain; the sequence is VETLKRHRVV…FTHCPILRIS (174 aa). 595–602 is an ATP binding site; the sequence is GETGSGKS. The short motif at 702–705 is the DEAH box element; that stretch reads DEVH. In terms of domain architecture, Helicase C-terminal spans 849–1026; sequence LILELLAYLD…ELCLHIMKCN (178 aa).

This sequence belongs to the DEAD box helicase family. DEAH subfamily. In terms of assembly, part of the 43S pre-initiation complex (PIC) that contains at least Met-tRNA, EIF1, EIF1A (EIF1AX or EIF1AY), EIF2S1, EIF2S2, EIF2S3, EIF3A, EIF3B, EIF3C, EIF3D, EIF3E, EIF3F, EIF3G, EIF3H, EIF3I, EIF3J, EIF3K, EIF3L, EIF3M, DHX29 and the 40S ribosomal subunit.

The protein resides in the cytoplasm. It carries out the reaction ATP + H2O = ADP + phosphate + H(+). In terms of biological role, ATP-binding RNA helicase involved in translation initiation. Part of the 43S pre-initiation complex that is required for efficient initiation on mRNAs of higher eukaryotes with structured 5'-UTRs by promoting efficient NTPase-dependent 48S complex formation. Specifically binds to the 40S ribosome near the mRNA entrance. Does not possess a processive helicase activity. This is ATP-dependent RNA helicase DHX29 from Homo sapiens (Human).